Consider the following 220-residue polypeptide: Adenylate kinase (220 aa).

10–15 (GAGKGT) provides a ligand contact to ATP. The NMP stretch occupies residues 30-59 (STGDMLRAAVKAGTPLGVEAKGYMDAGKLV). Residues threonine 31, arginine 36, 57–59 (KLV), 85–88 (GFPR), and glutamine 92 contribute to the AMP site. Residues 122-159 (GRRTHPASGRTYHVKFNPPKVEGKDDVTGEPLIQRDDD) form an LID region. ATP is bound by residues arginine 123 and 132-133 (TY). 2 residues coordinate AMP: arginine 156 and arginine 167. Position 206 (glycine 206) interacts with ATP.

The protein belongs to the adenylate kinase family. Monomer.

Its subcellular location is the cytoplasm. The catalysed reaction is AMP + ATP = 2 ADP. Its pathway is purine metabolism; AMP biosynthesis via salvage pathway; AMP from ADP: step 1/1. Catalyzes the reversible transfer of the terminal phosphate group between ATP and AMP. Plays an important role in cellular energy homeostasis and in adenine nucleotide metabolism. This chain is Adenylate kinase, found in Burkholderia multivorans (strain ATCC 17616 / 249).